The following is a 231-amino-acid chain: Nuclear transcription factor Y subunit C-9 (231 aa).

A disordered region spans residues 211-231 (NPYMGQPMWQQQAPDQPDQEN).

Belongs to the NFYC/HAP5 subunit family. In terms of assembly, heterotrimeric transcription factor composed of three components, NF-YA, NF-YB and NF-YC. Interacts with NFYA2, NFYB2, CO and RGA. Interacts with REF6 (via N-terminus). In terms of tissue distribution, ubiquitous. Present in etiolated seedlings.

The protein localises to the nucleus. Stimulates the transcription of various genes by recognizing and binding to a CCAAT motif in promoters. Interacts with REF6 to directly regulate SOC1 transcription in response to flowering signals from photoperiod and gibberellic acid pathways. This Arabidopsis thaliana (Mouse-ear cress) protein is Nuclear transcription factor Y subunit C-9 (NFYC9).